The following is a 512-amino-acid chain: Threonine synthase (512 aa).

Lysine 121 bears the N6-(pyridoxal phosphate)lysine mark. 5 residues coordinate pyridoxal 5'-phosphate: glycine 273, asparagine 274, phenylalanine 275, aspartate 277, and threonine 445.

This sequence belongs to the threonine synthase family. Pyridoxal 5'-phosphate serves as cofactor.

It carries out the reaction O-phospho-L-homoserine + H2O = L-threonine + phosphate. It functions in the pathway amino-acid biosynthesis; L-threonine biosynthesis; L-threonine from L-aspartate: step 5/5. Catalyzes the gamma-elimination of phosphate from L-phosphohomoserine and the beta-addition of water to produce L-threonine. The polypeptide is Threonine synthase (THR4) (Eremothecium gossypii (strain ATCC 10895 / CBS 109.51 / FGSC 9923 / NRRL Y-1056) (Yeast)).